The chain runs to 217 residues: Small ribosomal subunit protein uS3 (217 aa).

In terms of domain architecture, KH type-2 spans 38-106 (IRKFIDNELK…KVHINVIEIK (69 aa)).

The protein belongs to the universal ribosomal protein uS3 family. Part of the 30S ribosomal subunit. Forms a tight complex with proteins S10 and S14.

Its function is as follows. Binds the lower part of the 30S subunit head. Binds mRNA in the 70S ribosome, positioning it for translation. The sequence is that of Small ribosomal subunit protein uS3 (rpsC) from Staphylococcus aureus (strain COL).